Here is a 417-residue protein sequence, read N- to C-terminus: Odorant receptor Or1 (417 aa).

Residues 1–2 (MK) are Cytoplasmic-facing. A helical transmembrane segment spans residues 3–23 (LNKLNPRWDAYDRRDSFWLQL). Over 24–45 (LCLKYLGLWPPEDTDQATRNRY) the chain is Extracellular. The chain crosses the membrane as a helical span at residues 46–66 (IAYGWALRIMFLHLYALTQAL). Topologically, residues 67 to 73 (YFKDVKD) are cytoplasmic. Residues 74-94 (INDIANALFVLMTQVTLIYKL) traverse the membrane as a helical segment. Residues 95–133 (EKFNYNIARIQACLRKLNCTLYHPKQREEFSPVLQSMSG) are Extracellular-facing. N112 carries N-linked (GlcNAc...) asparagine glycosylation. A helical transmembrane segment spans residues 134-154 (VFWLMIFLMFVAIFTIIMWVM). Topologically, residues 155 to 178 (SPAFDNERRLPVPAWFPVDYHHSD) are cytoplasmic. A helical membrane pass occupies residues 179 to 199 (IVYGVLFLYQTIGIVMSATYN). The Extracellular segment spans residues 200 to 284 (FSTDTMFSGL…ILSFGDEVQD (85 aa)). The chain crosses the membrane as a helical span at residues 285-305 (IFQGSIFAQVCASVIIICMTL). Residues 306 to 317 (LQATGDDVTMAD) lie on the Cytoplasmic side of the membrane. Residues 318–338 (LLGCGFYLLVMTSQVFIFCYV) form a helical membrane-spanning segment. Topologically, residues 339-417 (GNEISYTTDK…LAVLQSMESE (79 aa)) are extracellular.

It belongs to the insect chemoreceptor superfamily. Heteromeric odorant receptor channel (TC 1.A.69) family. Or2a subfamily. In terms of tissue distribution, female-specific antennae and maxillary palp expression.

The protein localises to the cell membrane. Its function is as follows. Odorant receptor which plays a critical role in the anthropophilic host-seeking behavior; establishes the host preference to transmit malaria. May participate in the phenomenon of decreased host-seeking behavior in disease vector mosquitoes after blood feeding. The chain is Odorant receptor Or1 (OR1) from Anopheles gambiae (African malaria mosquito).